The sequence spans 406 residues: MNPAVFLSLADLRCSLLLLVTSIFTPITAEIASLDSENIDEILNNADVALVNFYADWCRFSQMLHPIFEEASDVIKEEYPDKNQVVFARVDCDQHSDIAQRYRISKYPTLKLFRNGMMMKREYRGQRSVKALADYIRQQKSNPVHEIQSLDEVTNLDRSKRNIIGYFEQKDSENYRVFERVASILHDDCAFLSAFGDLSKPERYNGDNVIYKPPGRSAPDMVYLGSMTNFDVTYNWIQDKCVPLVREITFENGEELTEEGLPFLILFHMKDDTESLEIFQNEVARQLISEKGTINFLHADCDKFRHPLLHIQKTPADCPVIAIDSFRHMYVFGDFKDVLIPGKLKQFVFDLHSGKLHREFHHGPDPTDTAPGEQDQDVASSPPESSFQKLAPSEYRYTLLRDRDEL.

The first 29 residues, 1 to 29 (MNPAVFLSLADLRCSLLLLVTSIFTPITA), serve as a signal peptide directing secretion. The Thioredoxin domain occupies 30–138 (EIASLDSENI…VKALADYIRQ (109 aa)). Disulfide bonds link Cys189–Cys241 and Cys301–Cys318. Residues 236 to 285 (WIQDKCVPLVREITFENGEELTEEGLPFLILFHMKDDTESLEIFQNEVAR) are interaction with ITPR1. The segment at 360-387 (FHHGPDPTDTAPGEQDQDVASSPPESSF) is disordered. A compositionally biased stretch (polar residues) spans 377–387 (DVASSPPESSF). Positions 403–406 (RDEL) match the Prevents secretion from ER motif.

In terms of assembly, forms mixed disulfides with both ERO1A and ERO1B and cargo folding intermediates; the interactions with ERO1A and ERO1B result in their retention in the endoplasmic reticulum. Directly interacts with ITPR1 in a pH-, redox state- and calcium-dependent manner, but not with ITPR2 or ITPR3. The strength of this interaction inversely correlates with calcium concentration. Widely expressed.

The protein resides in the endoplasmic reticulum lumen. In terms of biological role, mediates thiol-dependent retention in the early secretory pathway, forming mixed disulfides with substrate proteins through its conserved CRFS motif. Inhibits the calcium channel activity of ITPR1. May have a role in the control of oxidative protein folding in the endoplasmic reticulum. Required to retain ERO1A and ERO1B in the endoplasmic reticulum. This Mus musculus (Mouse) protein is Endoplasmic reticulum resident protein 44 (Erp44).